The chain runs to 294 residues: MSDYLIKALAYDGMARVYAAVTTETIKEAQRRHDTWSVSSAALGRTMTGTLFLGAMQKEDQKITVKIEGDGPIGPIVADSNAQGQIRGFVTNPHVHFSELNEAGKLDVRRGVGTSGMLSVVKDLGFGENFTGQTPIVSGEIGEDFTYYLATSEQVNSSVGVGVLVNPDDTIEAAGGFMLQLLPGATDEIIDEIEKNLTALPTVSRMIEAGETPESILAKLAGGEDKLQILEKIPVSFECNCSKERFGSAIISLGKDEIRSMIEEDHGAEAECHFCRNTYDFSEEELEKLYEEAK.

Cystine bridges form between cysteine 239-cysteine 241 and cysteine 272-cysteine 275.

This sequence belongs to the HSP33 family. In terms of processing, under oxidizing conditions two disulfide bonds are formed involving the reactive cysteines. Under reducing conditions zinc is bound to the reactive cysteines and the protein is inactive.

The protein resides in the cytoplasm. Functionally, redox regulated molecular chaperone. Protects both thermally unfolding and oxidatively damaged proteins from irreversible aggregation. Plays an important role in the bacterial defense system toward oxidative stress. The chain is 33 kDa chaperonin from Listeria welshimeri serovar 6b (strain ATCC 35897 / DSM 20650 / CCUG 15529 / CIP 8149 / NCTC 11857 / SLCC 5334 / V8).